A 205-amino-acid polypeptide reads, in one-letter code: Guanylate kinase (205 aa).

Residues 19-197 form the Guanylate kinase-like domain; sequence PKLFTISAPA…AYRVLKSIFI (179 aa). 26 to 33 lines the ATP pocket; the sequence is APAGVGKT.

This sequence belongs to the guanylate kinase family.

Its subcellular location is the cytoplasm. It catalyses the reaction GMP + ATP = GDP + ADP. Essential for recycling GMP and indirectly, cGMP. The protein is Guanylate kinase (gmk) of Chlamydia pneumoniae (Chlamydophila pneumoniae).